We begin with the raw amino-acid sequence, 194 residues long: Dihydrofolate reductase HdrB (194 aa).

Residues 18 to 194 (RFVLVAAVAD…ADRGAEESDE (177 aa)) enclose the DHFR domain. Residues Ala-24 and 30 to 36 (VIGRDGT) each bind NADP(+). Asp-44 is a substrate binding site. 62-63 (KT) contributes to the NADP(+) binding site. The substrate site is built by Arg-69 and Arg-78. Residues 84–85 (TT) and 123–130 (GGATVYEQ) each bind NADP(+). Substrate is bound at residue Thr-141. Residues 173–194 (SFVTYERKQPAAADRGAEESDE) form a disordered region.

This sequence belongs to the dihydrofolate reductase family.

The catalysed reaction is (6S)-5,6,7,8-tetrahydrofolate + NADP(+) = 7,8-dihydrofolate + NADPH + H(+). It functions in the pathway cofactor biosynthesis; tetrahydrofolate biosynthesis; 5,6,7,8-tetrahydrofolate from 7,8-dihydrofolate: step 1/1. Its activity is regulated as follows. Maximum activity at KCl concentration of 0.5 M and activity decreases with increasing concentration of KCl. Key enzyme in folate metabolism. Catalyzes an essential reaction for de novo glycine and purine synthesis, and for DNA precursor synthesis. The protein is Dihydrofolate reductase HdrB (hdrB) of Haloferax volcanii (Halobacterium volcanii).